Here is a 316-residue protein sequence, read N- to C-terminus: Apolipoprotein E (316 aa).

The first 18 residues, 1-18 (MKVLWVALVITLLAGCQA), serve as a signal peptide directing secretion. 8 consecutive repeat copies span residues 79–100 (VLMD…GQLA), 101–122 (PIAQ…ARLA), 123–144 (SDME…AMMG), 145–166 (QTTD…KRLL), 167–188 (RDAE…EGSE), 189–210 (RSVS…ARAA), 211–232 (TVGT…QKLR), and 233–254 (GRVE…EQLE). The 8 X 22 AA approximate tandem repeats stretch occupies residues 79–254 (VLMDETMKEV…HLEEMREQLE (176 aa)). Met142 bears the Methionine sulfoxide mark. Residues 157–167 (HLRKLRKRLLR) are LDL and other lipoprotein receptors binding. 161-164 (LRKR) serves as a coordination point for heparin. Positions 209 to 289 (AATVGTLASQ…SWFEPLVEDM (81 aa)) are lipid-binding and lipoprotein association. 228–235 (HQKLRGRV) is a binding site for heparin. Residues 265–316 (SQMRLQAEAFQARLKSWFEPLVEDMQRQWAGLVEKVQLAMATSSTSAPSENH) form a homooligomerization region. The tract at residues 277-289 (RLKSWFEPLVEDM) is specificity for association with VLDL.

This sequence belongs to the apolipoprotein A1/A4/E family. Homotetramer. May interact with ABCA1; functionally associated with ABCA1 in the biogenesis of HDLs. May interact with APP/A4 amyloid-beta peptide; the interaction is extremely stable in vitro but its physiological significance is unclear. May interact with MAPT. May interact with MAP2. In the cerebrospinal fluid, interacts with secreted SORL1. Interacts with PMEL; this allows the loading of PMEL luminal fragment on ILVs to induce fibril nucleation. APOE exists as multiple glycosylated and sialylated glycoforms within cells and in plasma. The extent of glycosylation and sialylation are tissue and context specific. Post-translationally, glycated in plasma VLDL. In terms of processing, phosphorylated by FAM20C in the extracellular medium.

It localises to the secreted. Its subcellular location is the extracellular space. It is found in the extracellular matrix. The protein resides in the extracellular vesicle. The protein localises to the endosome. It localises to the multivesicular body. Functionally, APOE is an apolipoprotein, a protein associating with lipid particles, that mainly functions in lipoprotein-mediated lipid transport between organs via the plasma and interstitial fluids. APOE is a core component of plasma lipoproteins and is involved in their production, conversion and clearance. Apolipoproteins are amphipathic molecules that interact both with lipids of the lipoprotein particle core and the aqueous environment of the plasma. As such, APOE associates with chylomicrons, chylomicron remnants, very low density lipoproteins (VLDL) and intermediate density lipoproteins (IDL) but shows a preferential binding to high-density lipoproteins (HDL). It also binds a wide range of cellular receptors including the LDL receptor/LDLR and the very low-density lipoprotein receptor/VLDLR that mediate the cellular uptake of the APOE-containing lipoprotein particles. Finally, APOE also has a heparin-binding activity and binds heparan-sulfate proteoglycans on the surface of cells, a property that supports the capture and the receptor-mediated uptake of APOE-containing lipoproteins by cells. The protein is Apolipoprotein E (APOE) of Lipotes vexillifer (Yangtze river dolphin).